The following is a 506-amino-acid chain: Hippocampus abundant transcript-like protein 1 (506 aa).

The tract at residues 1-25 (MSVEPPPELEEKAASEPEAGAMPEK) is disordered. The Extracellular portion of the chain corresponds to 1–49 (MSVEPPPELEEKAASEPEAGAMPEKRAGAQAAGSTWLQGFGRPSVYHAA). The helical transmembrane segment at 50 to 70 (IVIFLEFFAWGLLTTPMLTVL) threads the bilayer. Topologically, residues 71–82 (HETFSQHTFLMN) are cytoplasmic. A helical transmembrane segment spans residues 83 to 103 (GLIQGVKGLLSFLSAPLIGAL). At 104 to 111 (SDVWGRKP) the chain is on the extracellular side. The helical transmembrane segment at 112–132 (FLLGTVFFTCFPIPLMRISPW) threads the bilayer. Residues 133–134 (WY) lie on the Cytoplasmic side of the membrane. A helical membrane pass occupies residues 135–155 (FAMISVSGVFSVTFSVIFAYV). The Extracellular segment spans residues 156 to 168 (ADVTQEHERSTAY). Residues 169-189 (GWVSATFAASLVSSPAIGAYL) form a helical membrane-spanning segment. Residues 190 to 196 (SASYGDS) are Cytoplasmic-facing. The chain crosses the membrane as a helical span at residues 197–217 (LVVLVATVVALLDICFILVAV). The Extracellular portion of the chain corresponds to 218-255 (PESLPEKMRPVSWGAQISWKQADPFASLKKVGKDSTVL). The helical transmembrane segment at 256 to 276 (LICITVFLSYLPEAGQYSSFF) threads the bilayer. Residues 277–281 (LYLRQ) are Cytoplasmic-facing. A helical membrane pass occupies residues 282-302 (VIGFGSVKIAAFIAMVGILSI). The Extracellular portion of the chain corresponds to 303–319 (VAQTAFLSILMRSLGNK). A helical membrane pass occupies residues 320–340 (NTVLLGLGFQMLQLAWYGFGS). Position 341 (glutamine 341) is a topological domain, cytoplasmic. Residues 342-362 (AWMMWAAGTVAAMSSITFPAI) form a helical membrane-spanning segment. At 363–387 (SALVSRNAESDQQGVAQGIITGIRG) the chain is on the extracellular side. Residues 388–408 (LCNGLGPALYGFIFYMFHVEL) traverse the membrane as a helical segment. Topologically, residues 409–428 (TELGPKLNSNNVPLQGAVIP) are cytoplasmic. A helical transmembrane segment spans residues 429–449 (GPPFLFGACIVLMSFLVALFI). Residues 450-506 (PEYSKASGVQKHSNSSSGSLTNTPERGSDEDIEPLLQDSSIWELSSFEEPGNQCTEL) are Extracellular-facing. The disordered stretch occupies residues 457-481 (GVQKHSNSSSGSLTNTPERGSDEDI). A compositionally biased stretch (polar residues) spans 459-474 (QKHSNSSSGSLTNTPE). N-linked (GlcNAc...) asparagine glycosylation occurs at asparagine 463.

Belongs to the major facilitator superfamily.

The protein localises to the membrane. The chain is Hippocampus abundant transcript-like protein 1 from Homo sapiens (Human).